The following is a 586-amino-acid chain: Dual specificity tyrosine-phosphorylation-regulated kinase 3 (586 aa).

Basic and acidic residues predominate over residues 1–13 (MGGAARDRGRKDA). The segment at 1–187 (MGGAARDRGR…QGVIGGPNNG (187 aa)) is disordered. Positions 208 to 521 (YEVLKIIGKG…PAQALRHPWI (314 aa)) constitute a Protein kinase domain. Residues 214–222 (IGKGSFGQV), Lys-237, and 287–290 (FELL) each bind ATP. Asp-334 functions as the Proton acceptor in the catalytic mechanism. Tyr-368 is subject to Phosphotyrosine. A Nuclear localization signal motif is present at residues 467-480 (RSRRGKKRGPPGSK).

The protein belongs to the protein kinase superfamily. CMGC Ser/Thr protein kinase family. MNB/DYRK subfamily. As to quaternary structure, interacts with SIRT1. It depends on Mg(2+) as a cofactor. In terms of processing, ubiquitinated at anaphase by the anaphase-promoting complex (APC/C), leading to its degradation by the proteasome. Protein kinase activity is activated following autophosphorylation at Tyr-368.

It localises to the nucleus. The protein localises to the cytoplasm. Its subcellular location is the nucleus speckle. It is found in the cytoplasmic granule. The protein resides in the cytoskeleton. It localises to the microtubule organizing center. The protein localises to the centrosome. The catalysed reaction is L-seryl-[protein] + ATP = O-phospho-L-seryl-[protein] + ADP + H(+). It carries out the reaction L-threonyl-[protein] + ATP = O-phospho-L-threonyl-[protein] + ADP + H(+). It catalyses the reaction L-tyrosyl-[protein] + ATP = O-phospho-L-tyrosyl-[protein] + ADP + H(+). Its activity is regulated as follows. Protein kinase activity is activated following autophosphorylation at Tyr-368. Dual-specificity protein kinase that promotes disassembly of several types of membraneless organelles during mitosis, such as stress granules, nuclear speckles and pericentriolar material. Dual-specificity tyrosine-regulated kinases (DYRKs) autophosphorylate a critical tyrosine residue in their activation loop and phosphorylate their substrate on serine and threonine residues. Acts as a central dissolvase of membraneless organelles during the G2-to-M transition, after the nuclear-envelope breakdown: acts by mediating phosphorylation of multiple serine and threonine residues in unstructured domains of proteins, such as SRRM1 and PCM1. Does not mediate disassembly of all membraneless organelles: disassembly of P-body and nucleolus is not regulated by DYRK3. Dissolution of membraneless organelles at the onset of mitosis is also required to release mitotic regulators, such as ZNF207, from liquid-unmixed organelles where they are sequestered and keep them dissolved during mitosis. Regulates mTORC1 by mediating the dissolution of stress granules: during stressful conditions, DYRK3 partitions from the cytosol to the stress granule, together with mTORC1 components, which prevents mTORC1 signaling. When stress signals are gone, the kinase activity of DYRK3 is required for the dissolution of stress granule and mTORC1 relocation to the cytosol: acts by mediating the phosphorylation of the mTORC1 inhibitor AKT1S1, allowing full reactivation of mTORC1 signaling. Also acts as a negative regulator of EPO-dependent erythropoiesis: may place an upper limit on red cell production during stress erythropoiesis. Inhibits cell death due to cytokine withdrawal in hematopoietic progenitor cells. Promotes cell survival upon genotoxic stress through phosphorylation of SIRT1: this in turn inhibits p53/TP53 activity and apoptosis. The protein is Dual specificity tyrosine-phosphorylation-regulated kinase 3 of Mus musculus (Mouse).